Consider the following 439-residue polypeptide: Probable glycine dehydrogenase (decarboxylating) subunit 1 (439 aa).

Belongs to the GcvP family. N-terminal subunit subfamily. In terms of assembly, the glycine cleavage system is composed of four proteins: P, T, L and H. In this organism, the P 'protein' is a heterodimer of two subunits.

The enzyme catalyses N(6)-[(R)-lipoyl]-L-lysyl-[glycine-cleavage complex H protein] + glycine + H(+) = N(6)-[(R)-S(8)-aminomethyldihydrolipoyl]-L-lysyl-[glycine-cleavage complex H protein] + CO2. Functionally, the glycine cleavage system catalyzes the degradation of glycine. The P protein binds the alpha-amino group of glycine through its pyridoxal phosphate cofactor; CO(2) is released and the remaining methylamine moiety is then transferred to the lipoamide cofactor of the H protein. The sequence is that of Probable glycine dehydrogenase (decarboxylating) subunit 1 from Aquifex aeolicus (strain VF5).